Here is a 368-residue protein sequence, read N- to C-terminus: tRNA(Met) cytidine acetate ligase (368 aa).

ATP is bound by residues 7-20, Gly96, Asn152, and Arg175; that span reads IAEF…HKYL.

This sequence belongs to the TmcAL family.

Its subcellular location is the cytoplasm. It catalyses the reaction cytidine(34) in elongator tRNA(Met) + acetate + ATP = N(4)-acetylcytidine(34) in elongator tRNA(Met) + AMP + diphosphate. In terms of biological role, catalyzes the formation of N(4)-acetylcytidine (ac(4)C) at the wobble position of elongator tRNA(Met), using acetate and ATP as substrates. First activates an acetate ion to form acetyladenylate (Ac-AMP) and then transfers the acetyl group to tRNA to form ac(4)C34. The sequence is that of tRNA(Met) cytidine acetate ligase from Streptococcus pyogenes serotype M5 (strain Manfredo).